Consider the following 557-residue polypeptide: Protein NRT1/ PTR FAMILY 5.10 (557 aa).

The next 2 helical transmembrane spans lie at 49-67 and 79-99; these read FAYY…GPLG and AWSG…DSFL. Thr104 carries the post-translational modification Phosphothreonine. A run of 10 helical transmembrane segments spans residues 105 to 125, 144 to 164, 186 to 206, 215 to 235, 320 to 340, 365 to 385, 401 to 421, 443 to 463, 479 to 499, and 526 to 546; these read ILAA…SAMI, VITF…HKPC, SFFN…LWVL, WALG…VLLL, APIW…PTFF, FISL…IPIA, IGTG…VEMK, VWWL…AMVG, VGLA…SFMI, and YFYW…LYVA.

It belongs to the major facilitator superfamily. Proton-dependent oligopeptide transporter (POT/PTR) (TC 2.A.17) family. As to expression, expressed in shoots, roots and stems. Detected in leaves, flowers and siliques.

The protein localises to the membrane. This chain is Protein NRT1/ PTR FAMILY 5.10 (NPF5.10), found in Arabidopsis thaliana (Mouse-ear cress).